Consider the following 367-residue polypeptide: Apolipoprotein A-V (367 aa).

A signal peptide spans 1–20 (MVAVLTWALALLSAFATVQT). At Ser-56 the chain carries Phosphoserine. The tract at residues 71 to 90 (LGPLSGQGREPPGLPHDPEG) is disordered.

Belongs to the apolipoprotein A1/A4/E family. As to quaternary structure, interacts with GPIHBP1. Interacts with SORL1; this interaction leads to APOA5 internalization and sorting either to lysosomes and degradation, or to the trans-Golgi network. Post-translationally, phosphorylated by FAM20C in the extracellular medium.

The protein localises to the secreted. It is found in the early endosome. It localises to the late endosome. The protein resides in the golgi apparatus. Its subcellular location is the trans-Golgi network. Functionally, minor apolipoprotein mainly associated with HDL and to a lesser extent with VLDL. May also be associated with chylomicrons. Important determinant of plasma triglyceride (TG) levels by both being a potent stimulator of apo-CII lipoprotein lipase (LPL) TG hydrolysis and an inhibitor of the hepatic VLDL-TG production rate (without affecting the VLDL-apoB production rate). Activates poorly lecithin:cholesterol acyltransferase (LCAT) and does not enhance efflux of cholesterol from macrophages. Binds heparin. This is Apolipoprotein A-V (APOA5) from Neomonachus schauinslandi (Hawaiian monk seal).